Here is a 395-residue protein sequence, read N- to C-terminus: Guanine nucleotide-binding protein subunit beta-5b (395 aa).

WD repeat units follow at residues 103-142 (GHGN…KEHA), 145-184 (MPCT…NENL), 193-234 (MHTN…QSFH), 235-276 (GHSA…NVQS), 279-318 (THDS…EVAI), 320-362 (SKDS…RVAI), and 365-395 (GHEN…RIWA).

Belongs to the WD repeat G protein beta family. In terms of assembly, may interact with RGS9; this interaction stabilizes both proteins and increases RGS9 GTPase-activating protein (GAP) activity, hence accelerating the deactivation of D(2) dopamine receptor-mediated signaling.

Its subcellular location is the membrane. Enhances GTPase-activating protein (GAP) activity of regulator of G protein signaling (RGS) proteins, such as RGS7 and RGS9, hence involved in the termination of the signaling initiated by the G protein coupled receptors (GPCRs) by accelerating the GTP hydrolysis on the G-alpha subunits, thereby promoting their inactivation. Increases RGS7 GTPase-activating protein (GAP) activity, thereby regulating mood and cognition. Increases RGS9 GTPase-activating protein (GAP) activity, hence contributes to the deactivation of G protein signaling initiated by D(2) dopamine receptors. Along with gnb5a, plays an important role in neuronal signaling, including in the parasympathetic, but not sympathetic, control of heart rate. The polypeptide is Guanine nucleotide-binding protein subunit beta-5b (Danio rerio (Zebrafish)).